The chain runs to 86 residues: MANIKSAKKRAITSEKRRQHNASRRSMMRTFFKKVIAAIEAGEKENATKAFADMQPVLDRMATKGLIHKNKAARQKARLTAKIKAL.

A disordered region spans residues methionine 1–serine 26.

This sequence belongs to the bacterial ribosomal protein bS20 family.

In terms of biological role, binds directly to 16S ribosomal RNA. This chain is Small ribosomal subunit protein bS20, found in Photobacterium profundum (strain SS9).